We begin with the raw amino-acid sequence, 407 residues long: Arginine deiminase (407 aa).

C397 functions as the Amidino-cysteine intermediate in the catalytic mechanism.

Belongs to the arginine deiminase family.

Its subcellular location is the cytoplasm. The enzyme catalyses L-arginine + H2O = L-citrulline + NH4(+). It functions in the pathway amino-acid degradation; L-arginine degradation via ADI pathway; carbamoyl phosphate from L-arginine: step 1/2. In Escherichia coli O81 (strain ED1a), this protein is Arginine deiminase.